Consider the following 425-residue polypeptide: Probable G-protein coupled receptor 63 (425 aa).

Topologically, residues 1-87 (MVVSGVLTAP…VFKSLNLAVQ (87 aa)) are extracellular. Asn22, Asn34, and Asn68 each carry an N-linked (GlcNAc...) asparagine glycan. The helical transmembrane segment at 88-112 (IILSAIMIFILFVSFLGNLVVCLMV) threads the bilayer. At 113 to 123 (YQKAAMRSAIN) the chain is on the cytoplasmic side. Residues 124-148 (ILLASLAFADMLLAVLNMPFALVTI) form a helical membrane-spanning segment. Over 149 to 165 (LTTRWIFGKFFCRLSAM) the chain is Extracellular. A helical membrane pass occupies residues 166–190 (FFWLFVIEGVAILLIISIDRFLIIV). At 191–202 (QRQDKLNPYRAK) the chain is on the cytoplasmic side. Residues 203-222 (VLIAVSWATAFSVAFPLAVG) form a helical membrane-spanning segment. Residues 223–247 (NPDLQIPSRAPQCVFGYTTNSGYQA) lie on the Extracellular side of the membrane. A helical membrane pass occupies residues 248-272 (YVILISLISFFIPFLVILYSFMGIL). The Cytoplasmic portion of the chain corresponds to 273-321 (NTLRHNALRIHSYPEGICLSQASKLGLMSLQRPFQMSIDMGFKTRAFTT). Residues 322-345 (ILILFAVFIVCWAPFTTYSLVATF) form a helical membrane-spanning segment. Residues 346–357 (SKHFYYQHNFFE) lie on the Extracellular side of the membrane. The helical transmembrane segment at 358 to 379 (ISTWLLWLCYLKSALNPLIYYW) threads the bilayer. Residues 380–425 (RIKKFHDACLDMMPKSFKFLPRLPGHTRRRIRPSAVYVCGEHRTVL) are Cytoplasmic-facing.

The protein belongs to the G-protein coupled receptor 1 family. In terms of tissue distribution, brain specific.

It localises to the cell membrane. Orphan receptor. May play a role in brain function. The protein is Probable G-protein coupled receptor 63 (Gpr63) of Mus musculus (Mouse).